Consider the following 615-residue polypeptide: RNA polymerase sigma factor RpoD (615 aa).

A disordered region spans residues 177 to 215 (APTATHVGSELSQEDLDDDEDEDEEDGDDDAADDDNSID). The span at 188 to 214 (SQEDLDDDEDEDEEDGDDDAADDDNSI) shows a compositional bias: acidic residues. The sigma-70 factor domain-2 stretch occupies residues 381–451 (MVEANLRLVI…TRSIADQART (71 aa)). Positions 405 to 408 (DLIQ) match the Interaction with polymerase core subunit RpoC motif. Residues 460 to 536 (ETINKLNRIS…DTTLELPLDS (77 aa)) are sigma-70 factor domain-3. Residues 549–602 (VLAGLTAREAKVLRMRFGIDMNTDHTLEEVGKQFDVTRERIRQIEAKALRKLRH) are sigma-70 factor domain-4. A DNA-binding region (H-T-H motif) is located at residues 575–594 (LEEVGKQFDVTRERIRQIEA).

Belongs to the sigma-70 factor family. RpoD/SigA subfamily. Interacts transiently with the RNA polymerase catalytic core.

It is found in the cytoplasm. Its function is as follows. Sigma factors are initiation factors that promote the attachment of RNA polymerase to specific initiation sites and are then released. This sigma factor is the primary sigma factor during exponential growth. The polypeptide is RNA polymerase sigma factor RpoD (Salmonella typhi).